Here is a 141-residue protein sequence, read N- to C-terminus: Large ribosomal subunit protein uL11 (141 aa).

The protein belongs to the universal ribosomal protein uL11 family. As to quaternary structure, part of the ribosomal stalk of the 50S ribosomal subunit. Interacts with L10 and the large rRNA to form the base of the stalk. L10 forms an elongated spine to which L12 dimers bind in a sequential fashion forming a multimeric L10(L12)X complex. In terms of processing, one or more lysine residues are methylated.

Functionally, forms part of the ribosomal stalk which helps the ribosome interact with GTP-bound translation factors. The chain is Large ribosomal subunit protein uL11 from Streptococcus pyogenes serotype M1.